Reading from the N-terminus, the 239-residue chain is Large ribosomal subunit protein eL32 (239 aa).

Composition is skewed to acidic residues over residues 1 to 12 (MSDENDTPEELA) and 67 to 91 (VEAD…ADVE). Disordered regions lie at residues 1-23 (MSDE…SKAE) and 64-178 (GLEV…HPSG). Basic and acidic residues predominate over residues 92-113 (TELRARGLTEKTPDLSEDEQRL). The span at 130–155 (YHKKKRTPTSWRRPKGTLSKQRRGIK) shows a compositional bias: basic residues.

The protein belongs to the eukaryotic ribosomal protein eL32 family.

In Halobacterium salinarum (strain ATCC 700922 / JCM 11081 / NRC-1) (Halobacterium halobium), this protein is Large ribosomal subunit protein eL32 (rpl32e).